We begin with the raw amino-acid sequence, 408 residues long: Cytochrome P450 55A3 (408 aa).

Cys-357 is a binding site for heme.

It belongs to the cytochrome P450 family. It depends on heme as a cofactor.

The sequence is that of Cytochrome P450 55A3 (CYP55A3) from Fusarium lichenicola (Cylindrocarpon lichenicola).